Consider the following 311-residue polypeptide: Methionyl-tRNA formyltransferase (311 aa).

Position 108-111 (108-111) interacts with (6S)-5,6,7,8-tetrahydrofolate; sequence SILP.

The protein belongs to the Fmt family.

The enzyme catalyses L-methionyl-tRNA(fMet) + (6R)-10-formyltetrahydrofolate = N-formyl-L-methionyl-tRNA(fMet) + (6S)-5,6,7,8-tetrahydrofolate + H(+). Its function is as follows. Attaches a formyl group to the free amino group of methionyl-tRNA(fMet). The formyl group appears to play a dual role in the initiator identity of N-formylmethionyl-tRNA by promoting its recognition by IF2 and preventing the misappropriation of this tRNA by the elongation apparatus. This is Methionyl-tRNA formyltransferase from Sorangium cellulosum (strain So ce56) (Polyangium cellulosum (strain So ce56)).